Consider the following 303-residue polypeptide: Coenzyme PQQ synthesis protein B (303 aa).

The protein belongs to the PqqB family.

It functions in the pathway cofactor biosynthesis; pyrroloquinoline quinone biosynthesis. In terms of biological role, may be involved in the transport of PQQ or its precursor to the periplasm. This is Coenzyme PQQ synthesis protein B from Acinetobacter baumannii (strain SDF).